Consider the following 273-residue polypeptide: DnaJ homolog subfamily C member 27 (273 aa).

Residues 1 to 18 form a required for interaction with MAPK1 region; it reads METNVPKRKEPAKSLRIK. GTP-binding positions include 23 to 30, 71 to 75, and 134 to 137; these read GNAEVGKS, DMAGH, and NKID. The region spanning 217-273 is the J domain; that stretch reads DSWEMLGVRPGASREEVNKAYRKLAVLLHPDKCVAPGSEDAFKAVVNARTALLKNIK.

Belongs to the small GTPase superfamily. Rab family. In terms of assembly, interacts directly with MAPK1 (wild-type and kinase-deficient forms). Interacts directly (in GTP-bound form) with MAP2K1 (wild-type and kinase-deficient forms).

The protein localises to the nucleus. Functionally, GTPase which can activate the MEK/ERK pathway and induce cell transformation when overexpressed. May act as a nuclear scaffold for MAPK1, probably by association with MAPK1 nuclear export signal leading to enhanced ERK1/ERK2 signaling. The chain is DnaJ homolog subfamily C member 27 (Dnajc27) from Mus musculus (Mouse).